We begin with the raw amino-acid sequence, 257 residues long: Thiazole synthase (257 aa).

Catalysis depends on lysine 95, which acts as the Schiff-base intermediate with DXP. Residues glycine 156, alanine 182–glycine 183, and asparagine 204–threonine 205 contribute to the 1-deoxy-D-xylulose 5-phosphate site.

Belongs to the ThiG family. Homotetramer. Forms heterodimers with either ThiH or ThiS.

It is found in the cytoplasm. The catalysed reaction is [ThiS sulfur-carrier protein]-C-terminal-Gly-aminoethanethioate + 2-iminoacetate + 1-deoxy-D-xylulose 5-phosphate = [ThiS sulfur-carrier protein]-C-terminal Gly-Gly + 2-[(2R,5Z)-2-carboxy-4-methylthiazol-5(2H)-ylidene]ethyl phosphate + 2 H2O + H(+). It functions in the pathway cofactor biosynthesis; thiamine diphosphate biosynthesis. Functionally, catalyzes the rearrangement of 1-deoxy-D-xylulose 5-phosphate (DXP) to produce the thiazole phosphate moiety of thiamine. Sulfur is provided by the thiocarboxylate moiety of the carrier protein ThiS. In vitro, sulfur can be provided by H(2)S. The sequence is that of Thiazole synthase from Vibrio vulnificus (strain CMCP6).